The following is a 372-amino-acid chain: Alpha-1-antitrypsin homolog (372 aa).

A signal peptide spans 1–19; sequence MPATCLLHTMLTLPSPSTR. N214 and N226 each carry an N-linked (GlcNAc...) asparagine glycan. An RCL region spans residues 328–347; sequence AATTIEIMPMSLPDTVILNR.

It belongs to the serpin family.

Its subcellular location is the secreted. This chain is Alpha-1-antitrypsin homolog, found in Cyprinus carpio (Common carp).